A 268-amino-acid chain; its full sequence is Shikimate dehydrogenase (NADP(+)) (268 aa).

Threonine 62 is a binding site for shikimate. Lysine 66 functions as the Proton acceptor in the catalytic mechanism. Glutamate 78 contributes to the NADP(+) binding site. Positions 87 and 102 each coordinate shikimate. Residues 126–130 (GSGGI) and leucine 207 contribute to the NADP(+) site. Tyrosine 209 is a shikimate binding site. Position 230 (glycine 230) interacts with NADP(+).

This sequence belongs to the shikimate dehydrogenase family. As to quaternary structure, homodimer.

The enzyme catalyses shikimate + NADP(+) = 3-dehydroshikimate + NADPH + H(+). Its pathway is metabolic intermediate biosynthesis; chorismate biosynthesis; chorismate from D-erythrose 4-phosphate and phosphoenolpyruvate: step 4/7. Involved in the biosynthesis of the chorismate, which leads to the biosynthesis of aromatic amino acids. Catalyzes the reversible NADPH linked reduction of 3-dehydroshikimate (DHSA) to yield shikimate (SA). The polypeptide is Shikimate dehydrogenase (NADP(+)) (Thermoplasma acidophilum (strain ATCC 25905 / DSM 1728 / JCM 9062 / NBRC 15155 / AMRC-C165)).